A 125-amino-acid chain; its full sequence is Large ribosomal subunit protein bL17 (125 aa).

This sequence belongs to the bacterial ribosomal protein bL17 family. As to quaternary structure, part of the 50S ribosomal subunit. Contacts protein L32.

This Acinetobacter baylyi (strain ATCC 33305 / BD413 / ADP1) protein is Large ribosomal subunit protein bL17.